The sequence spans 283 residues: Short-chain dehydrogenase anuB (283 aa).

NADP(+) is bound by residues Thr57, Asp78, Asn106, Tyr166, Lys170, Val199, and Thr201. Residue Tyr166 is the Proton acceptor of the active site. Catalysis depends on Tyr166, which acts as the Proton donor. The active-site Lowers pKa of active site Tyr is Lys170.

This sequence belongs to the short-chain dehydrogenases/reductases (SDR) family.

It participates in secondary metabolite biosynthesis. In terms of biological role, highly reducing polyketide synthase; part of the gene cluster that mediates the biosynthesis of annullatin D, an alkylated aromatic polyketide with a fused dihydrobenzofuran lactone ring system that exhibits potent agonistic activities toward the cannabinoid receptors. The annullatin backbone 2-hydroxymethyl-3-pentylphenol is assembled from one acetyl-CoA starter unit and 5 malonyl-CoA elongation units by cooperation of the highly reducing polyketide synthase anuA, the short-chain dehydrogenase anuB and the oxidoreductase anuC, before being hydroxylated at the C-5 alkyl chain by the cytochrome P450 monooxygenase anuE to form (8S)-annullatin E. The prenyltransferase anuH subsequently installs one isoprenyl group at the benzene ring to form (8S)-annullatin J. Enzymatic or nonenzymatic dihydro-benzofuran ring formation between the prenyl and the phenolic hydroxyl groups in (8S)-annullatin J results in two diastereomers (2S,9S)-annullatin H and compound 12. The intermediate (2S,9S)-annullatin H is then converted to (2S,9S)-annullatin D by the FAD-linked oxidoreductase anuG-catalyzed five-member lactone ring formation. The isomer 12 acts as a substrate for the short-chain dehydrogenase anuF and is oxidized to (2R)-annullatin F, which is subsequently acetylated by an acetyltransferase leading to (2R)-annullatin G formation. The remaining enzymes identified within the cluster, anuD, anuI and anuJ, seem not to be involved in annullatin biosynthesis. This Penicillium roqueforti (strain FM164) protein is Short-chain dehydrogenase anuB.